The sequence spans 332 residues: UPF0194 membrane protein YbhG (332 aa).

An N-terminal signal peptide occupies residues 1–16; that stretch reads MMKKPVVIGLAVVVLA. Residues 141–210 are a coiled coil; it reads RTISANDLEN…NLQDSTLIAP (70 aa).

Belongs to the UPF0194 family.

It is found in the periplasm. The polypeptide is UPF0194 membrane protein YbhG (ybhG) (Shigella flexneri).